The chain runs to 967 residues: MGPGQPASTCVHLAPRTQLDGRSDPKVLQTQNQLQFNRNVPTHSSNLAIRYSCPHAIRIEKLKHSYNESYHCKDADCRVGPDLGSSVSFSVISQERLSYAVHLARRDVKRRQFEKHIKEHHLRSQPQSSQKCGHTKYKIPDHRVERKESKSQAACQCSHQPSKVEISSSGAKVYLYSSHPGQSDLTVPNSPPTHDPGLQPHPRIGDHKNISEQKSLLEVQRLQKELSSCIHKIEEVTKKDRLEEALDPDEERRIRIRRQEQAARSARMLYVLQQQVKEIQEELDKLSPHKIKHTKKSWAMSKLAAAHRGAIRALQMFVTQFTDRGEHPLPARCKELGSLIRQLSLCSVKLDADPSVPDVVIDILQQIEALESLLEKKLSPKKVKKCFSEIRSRFPIGSQKALERWPSTSPKGERRPLTAKDTFPQETSRPSVAKQLLADKYQPDTELPETQRLQSELDVLDADIVLEEGPFILDQSASFKDEVLAVAKTKAGKKKPVTENVPFRKKDTLAPARQQGLRKAERGRQSQPHSKSRVQQTTVSSRLKMNRQPVKDRKAPWIPPNPTSPPASPKCAAWLKVKTSPRDATKEPLQQEDPQEESHLTGAVEHEAARLAWLDAETSKRLKELEELKAKEIDSMQKQRLDWLDAETSRRTKELNELKAEEMYRLQQLSVSATHLADKVEEAVLDRLKPLLVKAQRVNSTTEANIHLKDGSSVNTAKAQPAQEVAAVDFESNNIRQLDDFLEDCASELWAVTHAKILGSETLATVEDSKDSPDLEIMMRRMEEMEKYQESVRQRYNKIAYADPRLWMQEENNDQKISAISEKPLSPHPIRITKTVDRKDPAVNIMLERPCNGNSLDESVGTEEGSEKREAPLLSLAEDSQQKEGRAPLFVPPGMQHSIGDYCSRFEQYLRIISHEAVGSFNPWLIAESFSEELVDEALGAVAAELQDMCEDYAEAVFTSEFLEAAT.

The segment at S178–H201 is disordered. Polar residues predominate over residues H179–P188. S287 and S409 each carry phosphoserine. Disordered regions lie at residues A401 to S431 and K490 to T601. Over residues Q525–L543 the composition is skewed to polar residues. Over residues W557–S568 the composition is skewed to pro residues. Residues A616 to D642 adopt a coiled-coil conformation. S700 and S826 each carry phosphoserine. Residues R849–P872 are disordered. Positions G885 to T967 are necessary and sufficient for CEP20-binding.

In terms of assembly, interacts with CEP63. Interacts with WDR62. Forms a complex with OFD1 and CEP20/FOR20. Interacts with PCM1.

The protein localises to the cytoplasm. It localises to the cytoskeleton. It is found in the microtubule organizing center. The protein resides in the centrosome. Its subcellular location is the centriole. The protein localises to the centriolar satellite. Involved in centriole duplication. Positively regulates CEP63 centrosomal localization. Required for WDR62 centrosomal localization and promotes the centrosomal localization of CDK2. May play a role in cilium assembly. The polypeptide is Protein moonraker (KIAA0753) (Homo sapiens (Human)).